Consider the following 178-residue polypeptide: tRNA (cytidine(56)-2'-O)-methyltransferase (178 aa).

Residues Leu-84, 109 to 113, and 127 to 134 contribute to the S-adenosyl-L-methionine site; these read GAEKV and IGNQPHSE.

This sequence belongs to the aTrm56 family. In terms of assembly, homodimer.

The protein resides in the cytoplasm. It catalyses the reaction cytidine(56) in tRNA + S-adenosyl-L-methionine = 2'-O-methylcytidine(56) in tRNA + S-adenosyl-L-homocysteine + H(+). Functionally, specifically catalyzes the AdoMet-dependent 2'-O-ribose methylation of cytidine at position 56 in tRNAs. The chain is tRNA (cytidine(56)-2'-O)-methyltransferase from Methanococcoides burtonii (strain DSM 6242 / NBRC 107633 / OCM 468 / ACE-M).